The primary structure comprises 334 residues: Ribosomal RNA small subunit methyltransferase C (334 aa).

It belongs to the methyltransferase superfamily. RsmC family. In terms of assembly, monomer.

Its subcellular location is the cytoplasm. It carries out the reaction guanosine(1207) in 16S rRNA + S-adenosyl-L-methionine = N(2)-methylguanosine(1207) in 16S rRNA + S-adenosyl-L-homocysteine + H(+). Specifically methylates the guanine in position 1207 of 16S rRNA in the 30S particle. The sequence is that of Ribosomal RNA small subunit methyltransferase C from Idiomarina loihiensis (strain ATCC BAA-735 / DSM 15497 / L2-TR).